The following is a 59-amino-acid chain: MAVQQNRKTPSKRGMRRSHDSLSKPTLSTEQNTGETHRRHHISADGYYRGRKVTRGQDD.

Residues methionine 1–aspartate 59 are disordered. A compositionally biased stretch (polar residues) spans serine 23–glycine 34. A compositionally biased stretch (basic residues) spans arginine 49–aspartate 59.

The protein belongs to the bacterial ribosomal protein bL32 family.

This chain is Large ribosomal subunit protein bL32, found in Halorhodospira halophila (strain DSM 244 / SL1) (Ectothiorhodospira halophila (strain DSM 244 / SL1)).